Reading from the N-terminus, the 156-residue chain is Small ribosomal subunit protein uS7 (156 aa).

This sequence belongs to the universal ribosomal protein uS7 family. As to quaternary structure, part of the 30S ribosomal subunit. Contacts proteins S9 and S11.

Its function is as follows. One of the primary rRNA binding proteins, it binds directly to 16S rRNA where it nucleates assembly of the head domain of the 30S subunit. Is located at the subunit interface close to the decoding center, probably blocks exit of the E-site tRNA. This chain is Small ribosomal subunit protein uS7, found in Bacillus velezensis (strain DSM 23117 / BGSC 10A6 / LMG 26770 / FZB42) (Bacillus amyloliquefaciens subsp. plantarum).